Here is a 194-residue protein sequence, read N- to C-terminus: N-acetyltransferase (194 aa).

The 165-residue stretch at 9-173 (PQVRPGIAED…GRYWDVRWYE (165 aa)) folds into the N-acetyltransferase domain.

This sequence belongs to the acetyltransferase family. PAT/BAR subfamily.

The protein is N-acetyltransferase (nat) of Streptomyces griseus.